The primary structure comprises 82 residues: MKENIHPQYRTVIFHDTSVDAYFKVGSTIQTDKTIEYEGQRYPYVTLDVSSQSHPFYTGKQKTHSQEGNVARFNKRFGRFVN.

It belongs to the bacterial ribosomal protein bL31 family. Type B subfamily. As to quaternary structure, part of the 50S ribosomal subunit.

In Proteus mirabilis (strain HI4320), this protein is Large ribosomal subunit protein bL31B.